A 138-amino-acid polypeptide reads, in one-letter code: Small ribosomal subunit protein uS11c (138 aa).

A disordered region spans residues 1–21 (MAKSIPKIGSRKTGRIGSRKH). Residues 9–21 (GSRKTGRIGSRKH) show a composition bias toward basic residues.

Belongs to the universal ribosomal protein uS11 family. In terms of assembly, part of the 30S ribosomal subunit.

The protein resides in the plastid. It is found in the chloroplast. This is Small ribosomal subunit protein uS11c from Pisum sativum (Garden pea).